A 244-amino-acid chain; its full sequence is Transcription factor Sox-12 (244 aa).

Residues 1-22 (MVQNKTTGSCPKPTEVAPGGPS) form a disordered region. Residues 31 to 99 (IKRPMNAFMV…KHMADYPNYK (69 aa)) constitute a DNA-binding region (HMG box). Disordered regions lie at residues 101-137 (RPRR…QMDT) and 152-193 (GDQV…HEGL). Composition is skewed to polar residues over residues 120–137 (STAT…QMDT) and 176–186 (HTKTVPSSPQS).

Expressed at a low level in embryos, and in the adult lung, ovary, skeletal muscle, testis, brain and heart.

It localises to the nucleus. Its function is as follows. Transcription factor that binds to the sequence 5'-AACAAT-3'. Acts as a transcriptional activator. The protein is Transcription factor Sox-12 (sox12) of Xenopus laevis (African clawed frog).